We begin with the raw amino-acid sequence, 305 residues long: NADH-cytochrome b5 reductase 1 (305 aa).

The helical transmembrane segment at 8–28 threads the bilayer; the sequence is VLLASLGVGLFTLFGLALGTY. Positions 44 to 156 constitute an FAD-binding FR-type domain; sequence DEKYLLRLLD…RGPSGLLSYA (113 aa). Residues 136–166 and 175–210 contribute to the FAD site; these read DSLK…IQPN and VAKK…QCFL.

The protein belongs to the flavoprotein pyridine nucleotide cytochrome reductase family. The cofactor is FAD.

It is found in the membrane. It carries out the reaction 2 Fe(III)-[cytochrome b5] + NADH = 2 Fe(II)-[cytochrome b5] + NAD(+) + H(+). NADH-cytochrome b5 reductases are involved in desaturation and elongation of fatty acids, cholesterol biosynthesis, drug metabolism, and, in erythrocyte, methemoglobin reduction. The chain is NADH-cytochrome b5 reductase 1 (Cyb5r1) from Rattus norvegicus (Rat).